The primary structure comprises 149 residues: Nucleoside diphosphate kinase (149 aa).

ATP contacts are provided by K9, F57, R85, T91, R102, and N112. The Pros-phosphohistidine intermediate role is filled by H115.

It belongs to the NDK family. As to quaternary structure, homotetramer. It depends on Mg(2+) as a cofactor.

The protein localises to the cytoplasm. It carries out the reaction a 2'-deoxyribonucleoside 5'-diphosphate + ATP = a 2'-deoxyribonucleoside 5'-triphosphate + ADP. The enzyme catalyses a ribonucleoside 5'-diphosphate + ATP = a ribonucleoside 5'-triphosphate + ADP. In terms of biological role, major role in the synthesis of nucleoside triphosphates other than ATP. The ATP gamma phosphate is transferred to the NDP beta phosphate via a ping-pong mechanism, using a phosphorylated active-site intermediate. This Roseiflexus castenholzii (strain DSM 13941 / HLO8) protein is Nucleoside diphosphate kinase.